A 289-amino-acid chain; its full sequence is Glycine--tRNA ligase alpha subunit (289 aa).

It belongs to the class-II aminoacyl-tRNA synthetase family. As to quaternary structure, tetramer of two alpha and two beta subunits.

It localises to the cytoplasm. The enzyme catalyses tRNA(Gly) + glycine + ATP = glycyl-tRNA(Gly) + AMP + diphosphate. This is Glycine--tRNA ligase alpha subunit from Nitratidesulfovibrio vulgaris (strain ATCC 29579 / DSM 644 / CCUG 34227 / NCIMB 8303 / VKM B-1760 / Hildenborough) (Desulfovibrio vulgaris).